A 126-amino-acid chain; its full sequence is 14 kDa phosphohistidine phosphatase (126 aa).

Substrate is bound at residue Lys-22. Residue His-54 is the Proton acceptor of the active site. 95-97 (SMG) lines the substrate pocket.

It belongs to the janus family. In terms of assembly, monomer.

It localises to the cytoplasm. It catalyses the reaction N(pros)-phospho-L-histidyl-[protein] + H2O = L-histidyl-[protein] + phosphate. It carries out the reaction N(tele)-phospho-L-histidyl-[protein] + H2O = L-histidyl-[protein] + phosphate. Its function is as follows. Exhibits phosphohistidine phosphatase activity. This is 14 kDa phosphohistidine phosphatase (PHPT1) from Sus scrofa (Pig).